The sequence spans 285 residues: MGLFKKRKYITVSSKNLDENNDVENQPTIPDGMWIKCSKCGKILYKSDVDDNFKVCPKCNAHLRMNARERIEFIIDEGTFIEFDKNMMAANPLEFPNYEAKIKSMQEKTGLKDGVVTGLGNINGYKTVIAVMDSNFMMGSMGSVVGEKITRAIEEATERKLPVIIFTTSGGARMQEGMFSLMQMAKTSAALAKHNEAGLLYVSVLTDPTTGGVTASFAMLGDIILAEPKTLIGFAGRRVIEQTINQKLPSDFQTSEFLFKHGFIDMIVERKELKVTLGNILRMHS.

The 253-residue stretch at 33–285 (MWIKCSKCGK…TLGNILRMHS (253 aa)) folds into the CoA carboxyltransferase N-terminal domain. 4 residues coordinate Zn(2+): cysteine 37, cysteine 40, cysteine 56, and cysteine 59. The C4-type zinc-finger motif lies at 37-59 (CSKCGKILYKSDVDDNFKVCPKC).

This sequence belongs to the AccD/PCCB family. In terms of assembly, acetyl-CoA carboxylase is a heterohexamer composed of biotin carboxyl carrier protein (AccB), biotin carboxylase (AccC) and two subunits each of ACCase subunit alpha (AccA) and ACCase subunit beta (AccD). Zn(2+) is required as a cofactor.

Its subcellular location is the cytoplasm. The catalysed reaction is N(6)-carboxybiotinyl-L-lysyl-[protein] + acetyl-CoA = N(6)-biotinyl-L-lysyl-[protein] + malonyl-CoA. Its pathway is lipid metabolism; malonyl-CoA biosynthesis; malonyl-CoA from acetyl-CoA: step 1/1. In terms of biological role, component of the acetyl coenzyme A carboxylase (ACC) complex. Biotin carboxylase (BC) catalyzes the carboxylation of biotin on its carrier protein (BCCP) and then the CO(2) group is transferred by the transcarboxylase to acetyl-CoA to form malonyl-CoA. The polypeptide is Acetyl-coenzyme A carboxylase carboxyl transferase subunit beta (Clostridium acetobutylicum (strain ATCC 824 / DSM 792 / JCM 1419 / IAM 19013 / LMG 5710 / NBRC 13948 / NRRL B-527 / VKM B-1787 / 2291 / W)).